The sequence spans 382 residues: MPDKILDDISHRRYNPLTDSWLLVSPHRTKRPWQGQQEGAAVTTLPEYDPKCYLCPGNSRAAGDQNPNYEQTFAFVNDYSAVKEQQPDYEVDQSSDDLESLLLRAQGVKGVCYVLTFSPKHNVTLADMSAKDILPTINHWTRLYANHLSPSNPLSAVAAQLQLPISKEEAPVPKDNYRYMQIFENKGAAMGCSNPHPHCQAWTTSTMPEEPGKELVQMAKYRQQHGRHLLADYIKLELAKEERVVWQNDSFVVVCPWWAIWPFEVLVLPKRHVRALVDLTADERLQLAEAIQEVTRRYDNLFECHFPYSSGIHQAPLDGTPEEIENAYFHMHFYPPLLRSATVKKFLVGFELMAEAQRDITPEQATIRLRACDGELYRNKLS.

Residues C52 and C55 each coordinate Zn(2+). UDP-alpha-D-glucose contacts are provided by residues A61 and 77 to 78 (ND). H121 is a Zn(2+) binding site. Position 185 (N185) interacts with UDP-alpha-D-glucose. H196 contacts Zn(2+). H198 (tele-UMP-histidine intermediate) is an active-site residue. Q200 contacts UDP-alpha-D-glucose. E214, H313, H330, and H332 together coordinate Fe cation. Residues 345–348 (KFLV) and 350–351 (FE) each bind UDP-alpha-D-glucose.

This sequence belongs to the galactose-1-phosphate uridylyltransferase type 1 family. Homodimer. The cofactor is Zn(2+).

The enzyme catalyses alpha-D-galactose 1-phosphate + UDP-alpha-D-glucose = alpha-D-glucose 1-phosphate + UDP-alpha-D-galactose. It functions in the pathway carbohydrate metabolism; galactose metabolism. In terms of biological role, essential for growth on galactose but not for cellulase induction. The sequence is that of Galactose-1-phosphate uridylyltransferase (gal7) from Hypocrea jecorina (Trichoderma reesei).